Consider the following 207-residue polypeptide: Large ribosomal subunit protein uL4 (207 aa).

Residues 49 to 78 (HAVKNRSAVSGGGRKPWRQKGTGRARQGSI) form a disordered region.

Belongs to the universal ribosomal protein uL4 family. In terms of assembly, part of the 50S ribosomal subunit.

In terms of biological role, one of the primary rRNA binding proteins, this protein initially binds near the 5'-end of the 23S rRNA. It is important during the early stages of 50S assembly. It makes multiple contacts with different domains of the 23S rRNA in the assembled 50S subunit and ribosome. Forms part of the polypeptide exit tunnel. The polypeptide is Large ribosomal subunit protein uL4 (Streptococcus equi subsp. zooepidemicus (strain H70)).